Reading from the N-terminus, the 466-residue chain is UDP-N-acetylmuramate--L-alanine ligase (466 aa).

114–120 is an ATP binding site; sequence GTHGKTT.

It belongs to the MurCDEF family.

It localises to the cytoplasm. It catalyses the reaction UDP-N-acetyl-alpha-D-muramate + L-alanine + ATP = UDP-N-acetyl-alpha-D-muramoyl-L-alanine + ADP + phosphate + H(+). It functions in the pathway cell wall biogenesis; peptidoglycan biosynthesis. Cell wall formation. The chain is UDP-N-acetylmuramate--L-alanine ligase from Mesorhizobium japonicum (strain LMG 29417 / CECT 9101 / MAFF 303099) (Mesorhizobium loti (strain MAFF 303099)).